Consider the following 492-residue polypeptide: DEAD-box ATP-dependent RNA helicase RhpA (492 aa).

Positions 20 to 48 (PSFNDLGLKESVLKSVYEAGFTSPSPIQE) match the Q motif motif. The region spanning 51–220 (IPAVLQGRDV…DKILENPIKI (170 aa)) is the Helicase ATP-binding domain. 64–71 (AQTGTGKT) is an ATP binding site. The short motif at 168 to 171 (DESD) is the DEAD box element. A Helicase C-terminal domain is found at 231-393 (DITQRFYVIN…EIPTINENQI (163 aa)). A disordered region spans residues 445 to 492 (AIQNPKEKTPKPSNKKTPQHERARSFKKGQHRDRHPKTNHYSKKPKRR). Basic residues predominate over residues 469 to 492 (SFKKGQHRDRHPKTNHYSKKPKRR).

The protein belongs to the DEAD box helicase family. As to quaternary structure, homodimer. Interacts with RNase J (rnj), might be a member of a minimal RNA degradosome complex.

The protein localises to the cytoplasm. The catalysed reaction is ATP + H2O = ADP + phosphate + H(+). In terms of biological role, DEAD-box RNA helicase probably involved in RNA degradation. Unwinds dsRNA in both 5'- and 3'-directions. This is DEAD-box ATP-dependent RNA helicase RhpA (rhpA) from Helicobacter pylori (strain ATCC 700392 / 26695) (Campylobacter pylori).